The primary structure comprises 434 residues: Serine/threonine transporter SstT (434 aa).

The next 9 membrane-spanning stretches (helical) occupy residues 14-34, 41-61, 72-92, 135-155, 172-192, 210-230, 282-302, 316-336, and 351-371; these read IVIG…WSFI, FVGA…MSAI, FGTV…AAVA, ALVE…GSGL, TVSA…VGLL, LLML…PFMV, ISIP…VSIM, IFLA…VSGI, and FGIS…IGVV. The segment at 413-434 is disordered; that stretch reads GKGTAEVVTPEKTNEAEESEQV.

Belongs to the dicarboxylate/amino acid:cation symporter (DAACS) (TC 2.A.23) family.

It is found in the cell membrane. The enzyme catalyses L-serine(in) + Na(+)(in) = L-serine(out) + Na(+)(out). It carries out the reaction L-threonine(in) + Na(+)(in) = L-threonine(out) + Na(+)(out). Its function is as follows. Involved in the import of serine and threonine into the cell, with the concomitant import of sodium (symport system). This is Serine/threonine transporter SstT from Lacticaseibacillus casei (strain BL23) (Lactobacillus casei).